Reading from the N-terminus, the 178-residue chain is Conodipine-P1 (178 aa).

The signal sequence occupies residues 1-24; the sequence is MKLLAPVLWAMAALGVTWLVAVDS. A 4-hydroxyproline; partial mark is found at P38, P42, and P49. H54 is an active-site residue. A propeptide spans 98–130 (interchain peptide); the sequence is KREVTSHRATSIAHSRLWKTALDQKSFLNRKAR. Q131 carries the pyrrolidone carboxylic acid modification. At P137 the chain carries 4-hydroxyproline; partial.

This sequence belongs to the phospholipase A2 family. Group IX subfamily. In terms of assembly, heterodimer of an alpha and a beta chain; probably disulfide-linked. Ca(2+) serves as cofactor. Expressed by the venom duct.

The protein resides in the secreted. The catalysed reaction is a 1,2-diacyl-sn-glycero-3-phosphocholine + H2O = a 1-acyl-sn-glycero-3-phosphocholine + a fatty acid + H(+). Catalyzes the calcium-dependent hydrolysis of the 2-acyl groups in 3-sn-phosphoglycerides. The protein is Conodipine-P1 of Conus purpurascens (Purple cone).